Reading from the N-terminus, the 345-residue chain is Biotin synthase (345 aa).

Positions 66 to 291 constitute a Radical SAM core domain; the sequence is PEVEIEGIIS…RTILRFAGGR (226 aa). Cys81, Cys85, and Cys88 together coordinate [4Fe-4S] cluster. Positions 124, 157, 216, and 286 each coordinate [2Fe-2S] cluster.

This sequence belongs to the radical SAM superfamily. Biotin synthase family. Homodimer. [4Fe-4S] cluster serves as cofactor. [2Fe-2S] cluster is required as a cofactor.

The catalysed reaction is (4R,5S)-dethiobiotin + (sulfur carrier)-SH + 2 reduced [2Fe-2S]-[ferredoxin] + 2 S-adenosyl-L-methionine = (sulfur carrier)-H + biotin + 2 5'-deoxyadenosine + 2 L-methionine + 2 oxidized [2Fe-2S]-[ferredoxin]. The protein operates within cofactor biosynthesis; biotin biosynthesis; biotin from 7,8-diaminononanoate: step 2/2. In terms of biological role, catalyzes the conversion of dethiobiotin (DTB) to biotin by the insertion of a sulfur atom into dethiobiotin via a radical-based mechanism. The chain is Biotin synthase from Mycobacterium leprae (strain Br4923).